The chain runs to 142 residues: Small ribosomal subunit protein bS6 (142 aa).

The interval 103–142 (KAAESREQRAPRGEDRPARVVADDVDDSDDDTDDEDSNDE) is disordered. Over residues 105-124 (AESREQRAPRGEDRPARVVA) the composition is skewed to basic and acidic residues. A compositionally biased stretch (acidic residues) spans 125–142 (DDVDDSDDDTDDEDSNDE).

Belongs to the bacterial ribosomal protein bS6 family.

In terms of biological role, binds together with bS18 to 16S ribosomal RNA. This Hahella chejuensis (strain KCTC 2396) protein is Small ribosomal subunit protein bS6.